The sequence spans 543 residues: Hydroxylamine reductase (543 aa).

The [4Fe-4S] cluster site is built by C3, C6, C15, and C21. Hybrid [4Fe-2O-2S] cluster is bound by residues H244, E268, C312, C399, C427, C452, E486, and K488. C399 carries the post-translational modification Cysteine persulfide.

It belongs to the HCP family. [4Fe-4S] cluster serves as cofactor. The cofactor is hybrid [4Fe-2O-2S] cluster.

The protein resides in the cytoplasm. The enzyme catalyses A + NH4(+) + H2O = hydroxylamine + AH2 + H(+). Its function is as follows. Catalyzes the reduction of hydroxylamine to form NH(3) and H(2)O. The protein is Hydroxylamine reductase of Methanocella arvoryzae (strain DSM 22066 / NBRC 105507 / MRE50).